Reading from the N-terminus, the 528-residue chain is Phosphoenolpyruvate carboxykinase (ATP) (528 aa).

The substrate site is built by Arg56, Tyr192, and Lys198. ATP-binding positions include Lys198, His217, and 233-241 (GLSGTGKTT). Positions 198 and 217 each coordinate Mn(2+). Asp254 is a Mn(2+) binding site. Glu282, Arg319, and Thr444 together coordinate ATP. Substrate is bound at residue Arg319.

It belongs to the phosphoenolpyruvate carboxykinase (ATP) family. It depends on Mn(2+) as a cofactor.

The protein localises to the cytoplasm. It carries out the reaction oxaloacetate + ATP = phosphoenolpyruvate + ADP + CO2. The protein operates within carbohydrate biosynthesis; gluconeogenesis. Involved in the gluconeogenesis. Catalyzes the conversion of oxaloacetate (OAA) to phosphoenolpyruvate (PEP) through direct phosphoryl transfer between the nucleoside triphosphate and OAA. In Bacillus cereus (strain B4264), this protein is Phosphoenolpyruvate carboxykinase (ATP).